The sequence spans 191 residues: Flagellar transcriptional regulator FlhC (191 aa).

The Zn(2+) site is built by Cys-137, Cys-140, Cys-157, and Cys-160.

This sequence belongs to the FlhC family. Heterohexamer composed of two FlhC and four FlhD subunits. Each FlhC binds a FlhD dimer, forming a heterotrimer, and a hexamer assembles by dimerization of two heterotrimers. The cofactor is Zn(2+).

The protein resides in the cytoplasm. Functionally, functions in complex with FlhD as a master transcriptional regulator that regulates transcription of several flagellar and non-flagellar operons by binding to their promoter region. Activates expression of class 2 flagellar genes, including fliA, which is a flagellum-specific sigma factor that turns on the class 3 genes. Also regulates genes whose products function in a variety of physiological pathways. The polypeptide is Flagellar transcriptional regulator FlhC (Nitrosomonas eutropha (strain DSM 101675 / C91 / Nm57)).